The sequence spans 206 residues: Inner membrane-spanning protein YciB (206 aa).

A run of 5 helical transmembrane segments spans residues 50–70, 78–98, 105–125, 150–170, and 173–193; these read PILL…GYLL, GTLW…IYFH, WKPT…QIFL, LSWV…AFNF, and AAWV…FIII.

It belongs to the YciB family.

The protein localises to the cell inner membrane. Functionally, plays a role in cell envelope biogenesis, maintenance of cell envelope integrity and membrane homeostasis. The chain is Inner membrane-spanning protein YciB from Herminiimonas arsenicoxydans.